The sequence spans 343 residues: Ribosomal RNA small subunit methyltransferase C (343 aa).

The protein belongs to the methyltransferase superfamily. RsmC family. In terms of assembly, monomer.

The protein resides in the cytoplasm. It carries out the reaction guanosine(1207) in 16S rRNA + S-adenosyl-L-methionine = N(2)-methylguanosine(1207) in 16S rRNA + S-adenosyl-L-homocysteine + H(+). Its function is as follows. Specifically methylates the guanine in position 1207 of 16S rRNA in the 30S particle. This chain is Ribosomal RNA small subunit methyltransferase C, found in Escherichia coli (strain 55989 / EAEC).